Here is a 418-residue protein sequence, read N- to C-terminus: Light-independent protochlorophyllide reductase subunit N (418 aa).

[4Fe-4S] cluster is bound by residues cysteine 17, cysteine 42, and cysteine 103.

It belongs to the BchN/ChlN family. Protochlorophyllide reductase is composed of three subunits; ChlL, ChlN and ChlB. Forms a heterotetramer of two ChlB and two ChlN subunits. [4Fe-4S] cluster is required as a cofactor.

The catalysed reaction is chlorophyllide a + oxidized 2[4Fe-4S]-[ferredoxin] + 2 ADP + 2 phosphate = protochlorophyllide a + reduced 2[4Fe-4S]-[ferredoxin] + 2 ATP + 2 H2O. The protein operates within porphyrin-containing compound metabolism; chlorophyll biosynthesis (light-independent). Its function is as follows. Component of the dark-operative protochlorophyllide reductase (DPOR) that uses Mg-ATP and reduced ferredoxin to reduce ring D of protochlorophyllide (Pchlide) to form chlorophyllide a (Chlide). This reaction is light-independent. The NB-protein (ChlN-ChlB) is the catalytic component of the complex. The chain is Light-independent protochlorophyllide reductase subunit N from Prochlorococcus marinus (strain AS9601).